Consider the following 244-residue polypeptide: 1-(5-phosphoribosyl)-5-[(5-phosphoribosylamino)methylideneamino] imidazole-4-carboxamide isomerase (244 aa).

Residue Asp-8 is the Proton acceptor of the active site. Asp-129 serves as the catalytic Proton donor.

Belongs to the HisA/HisF family.

Its subcellular location is the cytoplasm. The enzyme catalyses 1-(5-phospho-beta-D-ribosyl)-5-[(5-phospho-beta-D-ribosylamino)methylideneamino]imidazole-4-carboxamide = 5-[(5-phospho-1-deoxy-D-ribulos-1-ylimino)methylamino]-1-(5-phospho-beta-D-ribosyl)imidazole-4-carboxamide. It participates in amino-acid biosynthesis; L-histidine biosynthesis; L-histidine from 5-phospho-alpha-D-ribose 1-diphosphate: step 4/9. The chain is 1-(5-phosphoribosyl)-5-[(5-phosphoribosylamino)methylideneamino] imidazole-4-carboxamide isomerase from Chelativorans sp. (strain BNC1).